Consider the following 504-residue polypeptide: Anaerobic nitric oxide reductase transcription regulator NorR (504 aa).

Residue Asp57 is modified to 4-aspartylphosphate. The region spanning 187 to 416 is the Sigma-54 factor interaction domain; that stretch reads MIGLSPGMTQ…LEHAIHRAVV (230 aa). ATP contacts are provided by residues 215–222 and 278–287; these read GETGTGKE and ADNGTLFLDE. Residues 479–498 constitute a DNA-binding region (H-T-H motif); sequence WAACARMLETDVANLHRLAK.

It functions in the pathway nitrogen metabolism; nitric oxide reduction. In terms of biological role, required for the expression of anaerobic nitric oxide (NO) reductase, acts as a transcriptional activator for at least the norVW operon. Activation also requires sigma-54. This Escherichia coli (strain 55989 / EAEC) protein is Anaerobic nitric oxide reductase transcription regulator NorR.